Here is a 418-residue protein sequence, read N- to C-terminus: MTIAEQVATIAKNARQASIALARLSTTVKNEMLLKMADALEAGTTGLMCENAKDLAAGKEKGLSDAMLDRLMLDAKRIKGMADALREVASLADPVGEVTRMWKRPNGLMVGKMRIPLGVIGIVYESRPNVTADAAALCLKSGNAVVLRGGSEAIHSNRAIAATLQGVMKELGIPEAALSLIPFTEREGVLEMLKQEELIDLIIPRGGESLIRFVVENSRIPVIKHYKGVCHLFVDASADFEMATRIIINAKTQRPGVCNALETLLIHKDVAATFIPPFAKSLGELQVELRGDEEFRKYAPAAKVATEEDWAAEYLELILACKVVDDMDAAIDHINQYGSLHSEVIVTRDYANAQRFIREVNSSCVLVNASTRFNDGGQLGLGAEIGISTTKLHSFGPMGLEDLTTTKFIVYGDGQVRA.

The protein belongs to the gamma-glutamyl phosphate reductase family.

The protein resides in the cytoplasm. It catalyses the reaction L-glutamate 5-semialdehyde + phosphate + NADP(+) = L-glutamyl 5-phosphate + NADPH + H(+). The protein operates within amino-acid biosynthesis; L-proline biosynthesis; L-glutamate 5-semialdehyde from L-glutamate: step 2/2. Functionally, catalyzes the NADPH-dependent reduction of L-glutamate 5-phosphate into L-glutamate 5-semialdehyde and phosphate. The product spontaneously undergoes cyclization to form 1-pyrroline-5-carboxylate. The chain is Gamma-glutamyl phosphate reductase from Trichlorobacter lovleyi (strain ATCC BAA-1151 / DSM 17278 / SZ) (Geobacter lovleyi).